We begin with the raw amino-acid sequence, 402 residues long: Meiosis-specific cyclin rem1 (402 aa).

It belongs to the cyclin family. Cyclin AB subfamily.

Its function is as follows. Required for pre-meiotic DNA synthesis and S phase progression. Regulates levels of meiotic intragenic recombination. This chain is Meiosis-specific cyclin rem1 (rem1), found in Schizosaccharomyces pombe (strain 972 / ATCC 24843) (Fission yeast).